Reading from the N-terminus, the 265-residue chain is Mlc titration factor A (265 aa).

Residues His-111, His-148, His-152, and Glu-211 each contribute to the Zn(2+) site.

It belongs to the MtfA family. In terms of assembly, interacts with Mlc. The cofactor is Zn(2+).

Its subcellular location is the cytoplasm. Involved in the modulation of the activity of the glucose-phosphotransferase system (glucose-PTS). Interacts with the transcriptional repressor Mlc, preventing its interaction with DNA and leading to the modulation of expression of genes regulated by Mlc, including ptsG, which encodes the PTS system glucose-specific EIICB component. Functionally, shows zinc-dependent metallopeptidase activity. The chain is Mlc titration factor A from Salmonella enteritidis PT4 (strain P125109).